Consider the following 128-residue polypeptide: uncharacterized protein (128 aa).

As to expression, high expression in pituitary gland and weak in pancreas.

This is an uncharacterized protein from Homo sapiens (Human).